The following is a 479-amino-acid chain: MTDGDTSPAHTRPDAFGRVRHLHFVGIGGAGMGGIAEVLHNLGFTVTGSDLRENAITRRLAGLGVQVVFGHEADHVQGADAVVVSSAVQADNPEVQAAREYRIPVVRRAEMLAELMRFRYGIAVAGTHGKTTTTSLVASVLAEGGLDPTYVIGGRLNSSASHARLGSGRYLVAEADESDASFLHLKPMMAVVTNIDADHLETYGGDFDQLRHTFDEFLHHLPFYGLAVLCHDDPVLRDLGPEIARQVRSYGFAEDADLRAVDIEQSGRRTRFTVVDGEATFPVEVNLPGRHNVQNALAAIAVARELHVDVAAIQRALQRFQGIGRRFQDHGTLRFGDARVTLVDDYGHHPREIAATLRAVRDGWPGRRVLVVFQPHRYSRTRDLFEDFARVLSEADALLVTEVYAAGEPPVAGATGRGLCAAIRARGQVNPVFVETLEELQQVLPGVARDGDLVLTLGAGSIGGAAAELARRHGVEDGG.

An ATP-binding site is contributed by 126 to 132 (GTHGKTT).

It belongs to the MurCDEF family.

The protein resides in the cytoplasm. It carries out the reaction UDP-N-acetyl-alpha-D-muramate + L-alanine + ATP = UDP-N-acetyl-alpha-D-muramoyl-L-alanine + ADP + phosphate + H(+). Its pathway is cell wall biogenesis; peptidoglycan biosynthesis. Cell wall formation. The protein is UDP-N-acetylmuramate--L-alanine ligase of Alkalilimnicola ehrlichii (strain ATCC BAA-1101 / DSM 17681 / MLHE-1).